The chain runs to 493 residues: Glutamate--tRNA ligase (493 aa).

The short motif at 10–20 (PSPTGTPHVGL) is the 'HIGH' region element. A 'KMSKS' region motif is present at residues 254 to 258 (KLSKR). Lysine 257 provides a ligand contact to ATP.

It belongs to the class-I aminoacyl-tRNA synthetase family. Glutamate--tRNA ligase type 1 subfamily. Monomer.

It is found in the cytoplasm. The catalysed reaction is tRNA(Glu) + L-glutamate + ATP = L-glutamyl-tRNA(Glu) + AMP + diphosphate. Its function is as follows. Catalyzes the attachment of glutamate to tRNA(Glu) in a two-step reaction: glutamate is first activated by ATP to form Glu-AMP and then transferred to the acceptor end of tRNA(Glu). This Corynebacterium efficiens (strain DSM 44549 / YS-314 / AJ 12310 / JCM 11189 / NBRC 100395) protein is Glutamate--tRNA ligase.